The sequence spans 218 residues: Adenylate kinase (218 aa).

10 to 15 (GAGKGT) lines the ATP pocket. An NMP region spans residues 30-59 (STGDMIRETIKSGSALGQELKKVLDAGELV). Residues Thr-31, Arg-36, 57-59 (ELV), and Gln-92 contribute to the AMP site. Residues 122-159 (GRRIHPASGRTYHTKFNPPKVADKDDVTGEPLITRTDD) form an LID region. ATP contacts are provided by residues Arg-123 and 132 to 133 (TY). Arg-156 and Arg-167 together coordinate AMP. Residue Gln-202 participates in ATP binding.

This sequence belongs to the adenylate kinase family. As to quaternary structure, monomer.

The protein resides in the cytoplasm. It catalyses the reaction AMP + ATP = 2 ADP. It functions in the pathway purine metabolism; AMP biosynthesis via salvage pathway; AMP from ADP: step 1/1. Its function is as follows. Catalyzes the reversible transfer of the terminal phosphate group between ATP and AMP. Plays an important role in cellular energy homeostasis and in adenine nucleotide metabolism. The sequence is that of Adenylate kinase from Francisella tularensis subsp. tularensis (strain FSC 198).